The sequence spans 25 residues: Dermaseptin-5.2TR (25 aa).

The residue at position 25 (valine 25) is a Valine amide.

In terms of tissue distribution, expressed by the skin glands.

The protein resides in the secreted. Functionally, has antimicrobial activity. The sequence is that of Dermaseptin-5.2TR from Phyllomedusa trinitatis (Trinidad leaf frog).